We begin with the raw amino-acid sequence, 317 residues long: Pinoresinol reductase 1 (317 aa).

Thr18, Tyr20, Ile21, Arg41, Lys50, Ser90, Gly91, Arg95, Asn98, Ser121, and Glu122 together coordinate NADP(+). Met125 is a (-)-pinoresinol binding site. NADP(+) is bound by residues Lys144 and Phe166. Lys144 serves as the catalytic Proton acceptor. (-)-pinoresinol-binding residues include Met177 and Val178.

It belongs to the NmrA-type oxidoreductase family. Isoflavone reductase subfamily. Forms homodimers. As to expression, expressed in roots and stems.

It carries out the reaction (-)-lariciresinol + NADP(+) = (-)-pinoresinol + NADPH + H(+). The enzyme catalyses (+)-lariciresinol + NADP(+) = (+)-pinoresinol + NADPH + H(+). In terms of biological role, reductase involved in lignan biosynthesis. Involved in secondary cell wall biosynthesis in fiber cells. Unlike conventional pinoresinol reductases that can reduce both pinoresinol and lariciresinol, PRR1 shows a strict substrate preference toward pinoresinol. Active on both (+) and (-)-pinoresinol. Abstracts the 4R-hydride from the NADPH cofactor during catalysis. This is Pinoresinol reductase 1 from Arabidopsis thaliana (Mouse-ear cress).